We begin with the raw amino-acid sequence, 323 residues long: L-lactate dehydrogenase 1 (323 aa).

NAD(+)-binding positions include Val-17, Asp-38, Arg-43, Tyr-68, and 82-83 (GA). Residues Gln-85 and Arg-91 each coordinate substrate. Residues Ser-104, 121–123 (AAN), and Ser-146 contribute to the NAD(+) site. 123–126 (NPVD) provides a ligand contact to substrate. 151 to 154 (DTGR) serves as a coordination point for substrate. His-178 serves as the catalytic Proton acceptor. Position 223 is a phosphotyrosine (Tyr-223). Thr-232 is a binding site for substrate.

The protein belongs to the LDH/MDH superfamily. LDH family. As to quaternary structure, homotetramer.

The protein resides in the cytoplasm. It catalyses the reaction (S)-lactate + NAD(+) = pyruvate + NADH + H(+). Its pathway is fermentation; pyruvate fermentation to lactate; (S)-lactate from pyruvate: step 1/1. Functionally, catalyzes the conversion of lactate to pyruvate. The chain is L-lactate dehydrogenase 1 from Lactobacillus johnsonii (strain CNCM I-12250 / La1 / NCC 533).